Consider the following 327-residue polypeptide: ATP-dependent 6-phosphofructokinase (327 aa).

Glycine 12 contacts ATP. ADP-binding positions include 22-26 and 55-60; these read RGVVR and RYSVSD. ATP is bound by residues 73–74 and 103–106; these read RF and GDGS. Mg(2+) is bound at residue aspartate 104. 127–129 contributes to the substrate binding site; that stretch reads TID. The active-site Proton acceptor is aspartate 129. Residue arginine 156 coordinates ADP. Residues arginine 164 and 171 to 173 each bind substrate; that span reads MGR. ADP contacts are provided by residues 187-189, lysine 213, and 215-217; these read GCE and KKH. Substrate is bound by residues glutamate 224, arginine 245, and 251 to 254; that span reads HIQR.

It belongs to the phosphofructokinase type A (PFKA) family. ATP-dependent PFK group I subfamily. Prokaryotic clade 'B1' sub-subfamily. As to quaternary structure, homotetramer. Mg(2+) is required as a cofactor.

The protein localises to the cytoplasm. The enzyme catalyses beta-D-fructose 6-phosphate + ATP = beta-D-fructose 1,6-bisphosphate + ADP + H(+). It functions in the pathway carbohydrate degradation; glycolysis; D-glyceraldehyde 3-phosphate and glycerone phosphate from D-glucose: step 3/4. Allosterically activated by ADP and other diphosphonucleosides, and allosterically inhibited by phosphoenolpyruvate. In terms of biological role, catalyzes the phosphorylation of D-fructose 6-phosphate to fructose 1,6-bisphosphate by ATP, the first committing step of glycolysis. The sequence is that of ATP-dependent 6-phosphofructokinase from Yersinia pseudotuberculosis serotype O:1b (strain IP 31758).